Reading from the N-terminus, the 425-residue chain is MPVDQSFNAPLSEVDPEIAAVLEQELGRQRGTLEMIASENFVPRAVLQSQGSVLTNKYAEGYPGRRYYGGCEFVDVAEQLAIDRAKSLFGAEFANVQPHSGATANAAVLAAIAQPGDMILGLELAHGGHLTHGMKLNFSGKLYDAAAYGVDPDTFLIDMDVVREKALAHRPQVIIAGWSAYPRHLDFAAFRSIADEVGAKLWVDMAHFAGLVAAGVHPSPVPYADVVSSTVHKTLAGPRSGVILSRDTALAKKLNSAVFPGQQGGPLMHVIAAKATAFKIAATEEFADRQRRTIQGAQILAERLVAADSTEAGVSVLTGGTDVHLVLADLRNSPIDGKQAEDALHEVGITVNRNSVPFDPRPPMVTSGVRIGTSALATRGFGETEFTEVADIIAETLKPDSDLAALRARVLTLTDGFPLYEGLTQ.

Residues leucine 124 and 128 to 130 (GHL) contribute to the (6S)-5,6,7,8-tetrahydrofolate site. Lysine 233 is modified (N6-(pyridoxal phosphate)lysine).

It belongs to the SHMT family. As to quaternary structure, homodimer. Pyridoxal 5'-phosphate serves as cofactor.

Its subcellular location is the cytoplasm. The catalysed reaction is (6R)-5,10-methylene-5,6,7,8-tetrahydrofolate + glycine + H2O = (6S)-5,6,7,8-tetrahydrofolate + L-serine. It functions in the pathway one-carbon metabolism; tetrahydrofolate interconversion. The protein operates within amino-acid biosynthesis; glycine biosynthesis; glycine from L-serine: step 1/1. Functionally, catalyzes the reversible interconversion of serine and glycine with tetrahydrofolate (THF) serving as the one-carbon carrier. This reaction serves as the major source of one-carbon groups required for the biosynthesis of purines, thymidylate, methionine, and other important biomolecules. Also exhibits THF-independent aldolase activity toward beta-hydroxyamino acids, producing glycine and aldehydes, via a retro-aldol mechanism. This Clavibacter michiganensis subsp. michiganensis (strain NCPPB 382) protein is Serine hydroxymethyltransferase.